Reading from the N-terminus, the 430-residue chain is Adenylosuccinate synthetase (430 aa).

GTP contacts are provided by residues 13–19 (GDEGKGK) and 41–43 (GHT). Catalysis depends on Asp14, which acts as the Proton acceptor. The Mg(2+) site is built by Asp14 and Gly41. Residues 14–17 (DEGK), 39–42 (NAGH), Thr130, Arg144, Gln225, Thr240, and Arg304 each bind IMP. Residue His42 is the Proton donor of the active site. Residue 300–306 (ATTGRAR) participates in substrate binding. Residues Arg306, 332-334 (KLD), and 414-416 (STG) contribute to the GTP site.

This sequence belongs to the adenylosuccinate synthetase family. In terms of assembly, homodimer. It depends on Mg(2+) as a cofactor.

It is found in the cytoplasm. The enzyme catalyses IMP + L-aspartate + GTP = N(6)-(1,2-dicarboxyethyl)-AMP + GDP + phosphate + 2 H(+). Its pathway is purine metabolism; AMP biosynthesis via de novo pathway; AMP from IMP: step 1/2. In terms of biological role, plays an important role in the de novo pathway of purine nucleotide biosynthesis. Catalyzes the first committed step in the biosynthesis of AMP from IMP. The polypeptide is Adenylosuccinate synthetase (Pseudomonas fluorescens (strain ATCC BAA-477 / NRRL B-23932 / Pf-5)).